Reading from the N-terminus, the 886-residue chain is Protein translocase subunit SecA (886 aa).

Residues Q85, 103–107 (GEGKT), and D492 each bind ATP. Over residues 841 to 864 (RVVENRYAEEGPKQPARRENKVGR) the composition is skewed to basic and acidic residues. The tract at residues 841-866 (RVVENRYAEEGPKQPARRENKVGRND) is disordered. Zn(2+) is bound by residues C868, C870, C879, and C880.

It belongs to the SecA family. Monomer and homodimer. Part of the essential Sec protein translocation apparatus which comprises SecA, SecYEG and auxiliary proteins SecDF. Other proteins may also be involved. It depends on Zn(2+) as a cofactor.

It is found in the cell membrane. The protein resides in the cytoplasm. The catalysed reaction is ATP + H2O + cellular proteinSide 1 = ADP + phosphate + cellular proteinSide 2.. Functionally, part of the Sec protein translocase complex. Interacts with the SecYEG preprotein conducting channel. Has a central role in coupling the hydrolysis of ATP to the transfer of proteins into and across the cell membrane, serving as an ATP-driven molecular motor driving the stepwise translocation of polypeptide chains across the membrane. The protein is Protein translocase subunit SecA of Pelotomaculum thermopropionicum (strain DSM 13744 / JCM 10971 / SI).